Here is a 119-residue protein sequence, read N- to C-terminus: Holo-[acyl-carrier-protein] synthase (119 aa).

Positions 8 and 58 each coordinate Mg(2+).

The protein belongs to the P-Pant transferase superfamily. AcpS family. The cofactor is Mg(2+).

Its subcellular location is the cytoplasm. The enzyme catalyses apo-[ACP] + CoA = holo-[ACP] + adenosine 3',5'-bisphosphate + H(+). Its function is as follows. Transfers the 4'-phosphopantetheine moiety from coenzyme A to a Ser of acyl-carrier-protein. The sequence is that of Holo-[acyl-carrier-protein] synthase from Oceanobacillus iheyensis (strain DSM 14371 / CIP 107618 / JCM 11309 / KCTC 3954 / HTE831).